A 94-amino-acid polypeptide reads, in one-letter code: Pyrimidine/purine nucleoside phosphorylase (94 aa).

It belongs to the nucleoside phosphorylase PpnP family.

The enzyme catalyses a purine D-ribonucleoside + phosphate = a purine nucleobase + alpha-D-ribose 1-phosphate. It carries out the reaction adenosine + phosphate = alpha-D-ribose 1-phosphate + adenine. It catalyses the reaction cytidine + phosphate = cytosine + alpha-D-ribose 1-phosphate. The catalysed reaction is guanosine + phosphate = alpha-D-ribose 1-phosphate + guanine. The enzyme catalyses inosine + phosphate = alpha-D-ribose 1-phosphate + hypoxanthine. It carries out the reaction thymidine + phosphate = 2-deoxy-alpha-D-ribose 1-phosphate + thymine. It catalyses the reaction uridine + phosphate = alpha-D-ribose 1-phosphate + uracil. The catalysed reaction is xanthosine + phosphate = alpha-D-ribose 1-phosphate + xanthine. In terms of biological role, catalyzes the phosphorolysis of diverse nucleosides, yielding D-ribose 1-phosphate and the respective free bases. Can use uridine, adenosine, guanosine, cytidine, thymidine, inosine and xanthosine as substrates. Also catalyzes the reverse reactions. This is Pyrimidine/purine nucleoside phosphorylase from Pseudomonas fluorescens (strain Pf0-1).